We begin with the raw amino-acid sequence, 65 residues long: Small ribosomal subunit protein eS31 (65 aa).

Cys36, Cys39, Cys55, and Cys58 together coordinate Zn(2+). The C4-type zinc finger occupies 36–58 (CPKCGSVMAFHKEPVPRWHCGKC).

It belongs to the eukaryotic ribosomal protein eS31 family. In terms of assembly, part of the 30S ribosomal subunit. Zn(2+) serves as cofactor.

The chain is Small ribosomal subunit protein eS31 from Pyrobaculum aerophilum (strain ATCC 51768 / DSM 7523 / JCM 9630 / CIP 104966 / NBRC 100827 / IM2).